Here is a 440-residue protein sequence, read N- to C-terminus: MAKMPLSVVVFLLFSAAFLAVSMAEIKSLVISDDARPMILFEKFGFTHTGHVTVSISSVSVVSTSSDPNPEASRLGFFLLSEESLLQVLLEIQQNPRFCVLDSHYVTHLFTFRDLSPPPNSRFNQSYPVTSPNEYSLFFANCVPETKVSMAVRTEMYNKDPNGSKDYLPAGSTQLPTLYSFFFLCYVAFLGFWSYTCWTNKQTVHRIHLLMAGLLLIKSLNLICAAEDKHYVKITGTPHGWDILFYIFQFIRVVLLFTVIILIGTGWSFLKPFLQEKEKNVLIIVIPLQVLANIASIVIGETGPFIKDWVTWNQVFLLVDIICCCAIIFPIVWSIRSLRETSKTDGKAARNLSKLTLFRQFYIVVIGYLYFTRIVVFALKTIAAYKYQWVSFAAEEIVSLVFYVIMFHMFRPEEKNEYFAVDDDEEEAAALALRDEEFEL.

A signal peptide spans 1–24; that stretch reads MAKMPLSVVVFLLFSAAFLAVSMA. Residues N124 and N162 are each glycosylated (N-linked (GlcNAc...) asparagine). 5 helical membrane passes run 175-195, 207-227, 243-263, 281-301, and 315-335; these read LPTLYSFFFLCYVAFLGFWSY, IHLLMAGLLLIKSLNLICAAE, ILFYIFQFIRVVLLFTVIILI, VLIIVIPLQVLANIASIVIGE, and VFLLVDIICCCAIIFPIVWSI. N-linked (GlcNAc...) asparagine glycosylation is present at N351. 2 helical membrane passes run 363–383 and 390–410; these read IVVIGYLYFTRIVVFALKTIA and VSFAAEEIVSLVFYVIMFHMF.

The protein belongs to the LU7TM family.

The protein localises to the membrane. Plays a role in plants and microbes interactions. G-protein coupled receptor involved in root growth mediated by the bacterial quorum-sensing signals N-acyl-homoserine lactones (AHLs). This is Protein CANDIDATE G-PROTEIN COUPLED RECEPTOR 7 from Arabidopsis thaliana (Mouse-ear cress).